The sequence spans 201 residues: Large ribosomal subunit protein uL4 (201 aa).

Residues 44-68 are disordered; sequence RAQKSRAEVSGSGRKPWRQKGTGRA.

Belongs to the universal ribosomal protein uL4 family. Part of the 50S ribosomal subunit.

Functionally, one of the primary rRNA binding proteins, this protein initially binds near the 5'-end of the 23S rRNA. It is important during the early stages of 50S assembly. It makes multiple contacts with different domains of the 23S rRNA in the assembled 50S subunit and ribosome. Its function is as follows. Forms part of the polypeptide exit tunnel. The sequence is that of Large ribosomal subunit protein uL4 from Buchnera aphidicola subsp. Acyrthosiphon pisum (strain 5A).